We begin with the raw amino-acid sequence, 250 residues long: MNDFNRGYARSIPADRADMSVDAGLRKFMLGVYNKVALGLVVSGALAYATSSVPAVRDLLFVVQGGRLAGVTPLYMVVAFAPLVLMLIAGFAMRNPKPETAGALYWTIVSLIGASLGSVMLRYTGESVAATFFVTATAFGGLSLFGYTTKKDLTGFGSFLMMGVIGLIVASIVSIFLKSPALLFAINVLGVLIFSGLIAYDTQRLKMTYYEMGGDRASMAVATNFGALSLYINFINLFQFLLSFFGGNRE.

A run of 7 helical transmembrane segments spans residues 36–56 (VALG…VPAV), 73–93 (PLYM…GFAM), 101–121 (AGAL…SVML), 128–148 (VAAT…FGYT), 156–176 (FGSF…VSIF), 180–200 (PALL…LIAY), and 225–245 (FGAL…LSFF).

The protein belongs to the BI1 family.

It localises to the cell membrane. This is an uncharacterized protein from Caulobacter vibrioides (strain ATCC 19089 / CIP 103742 / CB 15) (Caulobacter crescentus).